The chain runs to 545 residues: MTTRYIFVTGGVVSSLGKGIAAASLAAILEARGLNVTIMKLDPYINVDPGTMSPTQHGEVFVTEDGAETDLDLGHYERFIRTKMNRRNNFTTGRIYEEVLRKERRGDYLGATIQVIPHITNAIKERVIAGGEGHDVAIVEIGGTVGDIESLPFLESIRQLGAELGRDRTLFMHLTLVPFLGAAGEIKTKPTQHSVKELRSIGIAPDVLVCRGDRAVPANERAKISLFCNVEERAVISLKDVDSIYKIPALLRSQGLDELVIKRFNIDCKEADLSEWENVIYQEANPNGEVTIGMVGKYIELPDAYKSVNEALKHAGLKNRVTVNIKYIDSQTVEAKGDEVLQGLDGILVPGGFGERGVEGKILAAKFARENKLPYFGICLGMQVALIEFARNVAGMADAHSTEFNPASPFPVVGLITEWIDEDGQLELRHEESDLGGTMRLGAQLCHLKEGTKAAEAYKGNTCVERHRHRYEVNNNYVDRLEKAGLIFSGLSSDRKLVEMIELAEHPWFVAGQFHPEFTSTPRDGHPLFEGFIAASLSHQKRILG.

The tract at residues 1–266 (MTTRYIFVTG…DELVIKRFNI (266 aa)) is amidoligase domain. Serine 14 contributes to the CTP binding site. Serine 14 is a UTP binding site. ATP is bound by residues 15–20 (SLGKGI) and aspartate 72. The Mg(2+) site is built by aspartate 72 and glutamate 140. CTP is bound by residues 147-149 (DIE), 187-192 (KTKPTQ), and lysine 223. UTP is bound by residues 187 to 192 (KTKPTQ) and lysine 223. ATP is bound at residue 239 to 241 (KDV). Positions 291-542 (TIGMVGKYIE…IAASLSHQKR (252 aa)) constitute a Glutamine amidotransferase type-1 domain. Glycine 352 is a binding site for L-glutamine. Cysteine 379 acts as the Nucleophile; for glutamine hydrolysis in catalysis. Residues 380–383 (LGMQ), glutamate 403, and arginine 470 each bind L-glutamine. Residues histidine 515 and glutamate 517 contribute to the active site.

It belongs to the CTP synthase family. Homotetramer.

It catalyses the reaction UTP + L-glutamine + ATP + H2O = CTP + L-glutamate + ADP + phosphate + 2 H(+). The catalysed reaction is L-glutamine + H2O = L-glutamate + NH4(+). The enzyme catalyses UTP + NH4(+) + ATP = CTP + ADP + phosphate + 2 H(+). Its pathway is pyrimidine metabolism; CTP biosynthesis via de novo pathway; CTP from UDP: step 2/2. Allosterically activated by GTP, when glutamine is the substrate; GTP has no effect on the reaction when ammonia is the substrate. The allosteric effector GTP functions by stabilizing the protein conformation that binds the tetrahedral intermediate(s) formed during glutamine hydrolysis. Inhibited by the product CTP, via allosteric rather than competitive inhibition. In terms of biological role, catalyzes the ATP-dependent amination of UTP to CTP with either L-glutamine or ammonia as the source of nitrogen. Regulates intracellular CTP levels through interactions with the four ribonucleotide triphosphates. This Shewanella denitrificans (strain OS217 / ATCC BAA-1090 / DSM 15013) protein is CTP synthase.